Consider the following 319-residue polypeptide: Putative GPI-anchor transamidase (319 aa).

The N-terminal stretch at 1 to 16 is a signal peptide; it reads MRHVLLIFCAIIATEA. Residues His-156 and Cys-198 contribute to the active site. N-linked (GlcNAc...) asparagine glycosylation occurs at Asn-257.

The protein belongs to the peptidase C13 family.

Its pathway is glycolipid biosynthesis; glycosylphosphatidylinositol-anchor biosynthesis. Its function is as follows. Mediates GPI anchoring in the endoplasmic reticulum, by replacing a protein's C-terminal GPI attachment signal peptide with a pre-assembled GPI. During this transamidation reaction, the GPI transamidase forms a carbonyl intermediate with the substrate protein. This is Putative GPI-anchor transamidase from Caenorhabditis elegans.